The primary structure comprises 91 residues: Small ribosomal subunit protein uS19 (91 aa).

It belongs to the universal ribosomal protein uS19 family.

Protein S19 forms a complex with S13 that binds strongly to the 16S ribosomal RNA. This chain is Small ribosomal subunit protein uS19, found in Synechococcus elongatus (strain ATCC 33912 / PCC 7942 / FACHB-805) (Anacystis nidulans R2).